The chain runs to 64 residues: MSEVINVNCPTCGKAVVWGEISPFRPFCCKRCQLIDLGEWAAEEKRIPSEGGLSDSDDWSEELK.

Zn(2+) contacts are provided by cysteine 9, cysteine 12, cysteine 28, and cysteine 32.

Belongs to the DNA gyrase inhibitor YacG family. As to quaternary structure, interacts with GyrB. Zn(2+) serves as cofactor.

Functionally, inhibits all the catalytic activities of DNA gyrase by preventing its interaction with DNA. Acts by binding directly to the C-terminal domain of GyrB, which probably disrupts DNA binding by the gyrase. The chain is DNA gyrase inhibitor YacG from Enterobacter sp. (strain 638).